The chain runs to 504 residues: Probable phenylalanine--tRNA ligase beta subunit (504 aa).

The B5 domain occupies 270 to 346; it reads IKDKSYLLSI…ICYGFNNINM (77 aa). Positions 324, 330, 333, and 334 each coordinate Mg(2+).

It belongs to the phenylalanyl-tRNA synthetase beta subunit family. Type 2 subfamily. In terms of assembly, tetramer of two alpha and two beta subunits. The cofactor is Mg(2+).

It is found in the cytoplasm. The enzyme catalyses tRNA(Phe) + L-phenylalanine + ATP = L-phenylalanyl-tRNA(Phe) + AMP + diphosphate + H(+). In Vairimorpha ceranae (strain BRL01) (Microsporidian parasite), this protein is Probable phenylalanine--tRNA ligase beta subunit.